The sequence spans 315 residues: Tryptophan prenyltransferase ComQ (315 aa).

Residues Asp95 and Asp99 each coordinate Mg(2+).

The protein belongs to the FPP/GGPP synthase family. Mg(2+) serves as cofactor.

It localises to the cell membrane. The catalysed reaction is L-tryptophyl-[protein] + (2E,6E)-farnesyl diphosphate = (2S,3R)-3-farnesyl-2,3-dihydro-2,N(alpha)-cyclo-L-tryptophyl-[protein] + diphosphate. Functionally, part of a major quorum-sensing system that regulates the development of genetic competence. Involved in the maturation of the competence pheromone ComX. Acts by catalyzing the transfer of a farnesyl group on the ComX pheromone. In vitro, can also catalyze the farnesylation of single tryptophan and tryptophan derivatives. The chain is Tryptophan prenyltransferase ComQ from Bacillus subtilis subsp. natto (strain BEST195).